A 187-amino-acid polypeptide reads, in one-letter code: Crossover junction endodeoxyribonuclease RuvC (187 aa).

Active-site residues include Asp7, Glu67, and Asp140. Positions 7, 67, and 140 each coordinate Mg(2+).

Belongs to the RuvC family. In terms of assembly, homodimer which binds Holliday junction (HJ) DNA. The HJ becomes 2-fold symmetrical on binding to RuvC with unstacked arms; it has a different conformation from HJ DNA in complex with RuvA. In the full resolvosome a probable DNA-RuvA(4)-RuvB(12)-RuvC(2) complex forms which resolves the HJ. Mg(2+) serves as cofactor.

It is found in the cytoplasm. The catalysed reaction is Endonucleolytic cleavage at a junction such as a reciprocal single-stranded crossover between two homologous DNA duplexes (Holliday junction).. Its function is as follows. The RuvA-RuvB-RuvC complex processes Holliday junction (HJ) DNA during genetic recombination and DNA repair. Endonuclease that resolves HJ intermediates. Cleaves cruciform DNA by making single-stranded nicks across the HJ at symmetrical positions within the homologous arms, yielding a 5'-phosphate and a 3'-hydroxyl group; requires a central core of homology in the junction. The consensus cleavage sequence is 5'-(A/T)TT(C/G)-3'. Cleavage occurs on the 3'-side of the TT dinucleotide at the point of strand exchange. HJ branch migration catalyzed by RuvA-RuvB allows RuvC to scan DNA until it finds its consensus sequence, where it cleaves and resolves the cruciform DNA. This chain is Crossover junction endodeoxyribonuclease RuvC, found in Chlorobium phaeobacteroides (strain DSM 266 / SMG 266 / 2430).